We begin with the raw amino-acid sequence, 286 residues long: MAELSLKKIYSGKVRDLYEIDDKRMLMVASDRLSAFDVILDDPIPHKGEILTQISNFWFKKLAHIMPNHFTGDSVYDVLPKAEADLLKDRAVVVKRLKPIKIESIVRGYLTGSGLKDYQQTGTICGLELPKGLVEAGKLPEPIFTPSSKEEVGDHDINISYAECERLIGKELAAQVRDAAIALYKEAAAYALTKGIIICDTKFEFGLDENGTLTLMDEVLTPDSSRFWSVDTYKEGTNPPSFDKQFVRDWLEQSGWNKQPPAPKVPAEVIEKTVAKYQEALDLLTK.

This sequence belongs to the SAICAR synthetase family.

It catalyses the reaction 5-amino-1-(5-phospho-D-ribosyl)imidazole-4-carboxylate + L-aspartate + ATP = (2S)-2-[5-amino-1-(5-phospho-beta-D-ribosyl)imidazole-4-carboxamido]succinate + ADP + phosphate + 2 H(+). It participates in purine metabolism; IMP biosynthesis via de novo pathway; 5-amino-1-(5-phospho-D-ribosyl)imidazole-4-carboxamide from 5-amino-1-(5-phospho-D-ribosyl)imidazole-4-carboxylate: step 1/2. The chain is Phosphoribosylaminoimidazole-succinocarboxamide synthase from Actinobacillus succinogenes (strain ATCC 55618 / DSM 22257 / CCUG 43843 / 130Z).